A 287-amino-acid chain; its full sequence is mRNA-capping enzyme regulatory subunit OPG124 (287 aa).

Belongs to the orthopoxvirus mRNA-capping enzyme regulatory subunit family. Interacts with the late transcription elongation factor VLTF-4/OPG110. Interacts with the late transcription factors VLTF-1.

It localises to the virion. Its function is as follows. Acts with RNA polymerase to initiate transcription from late gene promoters. This is mRNA-capping enzyme regulatory subunit OPG124 (OPG124) from Monkeypox virus.